We begin with the raw amino-acid sequence, 148 residues long: Ribonuclease H (148 aa).

Residues 1 to 142 enclose the RNase H type-1 domain; it reads MSDSVEMFTD…ADQLANRGVD (142 aa). Mg(2+) contacts are provided by Asp10, Glu48, Asp70, and Asp134.

The protein belongs to the RNase H family. As to quaternary structure, monomer. Mg(2+) serves as cofactor.

It is found in the cytoplasm. It catalyses the reaction Endonucleolytic cleavage to 5'-phosphomonoester.. Endonuclease that specifically degrades the RNA of RNA-DNA hybrids. The protein is Ribonuclease H of Pseudomonas putida (strain ATCC 700007 / DSM 6899 / JCM 31910 / BCRC 17059 / LMG 24140 / F1).